A 117-amino-acid chain; its full sequence is Holo-[acyl-carrier-protein] synthase (117 aa).

The Mg(2+) site is built by Asp8 and Glu58.

It belongs to the P-Pant transferase superfamily. AcpS family. Mg(2+) is required as a cofactor.

Its subcellular location is the cytoplasm. It carries out the reaction apo-[ACP] + CoA = holo-[ACP] + adenosine 3',5'-bisphosphate + H(+). In terms of biological role, transfers the 4'-phosphopantetheine moiety from coenzyme A to a Ser of acyl-carrier-protein. This is Holo-[acyl-carrier-protein] synthase from Staphylococcus epidermidis (strain ATCC 35984 / DSM 28319 / BCRC 17069 / CCUG 31568 / BM 3577 / RP62A).